Here is a 372-residue protein sequence, read N- to C-terminus: tRNA-specific 2-thiouridylase MnmA 1 (372 aa).

ATP contacts are provided by residues 26–33 (AISGGVDS) and methionine 52. Cysteine 118 acts as the Nucleophile in catalysis. Residues cysteine 118 and cysteine 214 are joined by a disulfide bond. Glycine 142 is an ATP binding site. The interval 164-166 (KDQ) is interaction with tRNA. Cysteine 214 (cysteine persulfide intermediate) is an active-site residue.

The protein belongs to the MnmA/TRMU family.

The protein localises to the cytoplasm. It carries out the reaction S-sulfanyl-L-cysteinyl-[protein] + uridine(34) in tRNA + AH2 + ATP = 2-thiouridine(34) in tRNA + L-cysteinyl-[protein] + A + AMP + diphosphate + H(+). Its function is as follows. Catalyzes the 2-thiolation of uridine at the wobble position (U34) of tRNA, leading to the formation of s(2)U34. The sequence is that of tRNA-specific 2-thiouridylase MnmA 1 from Syntrophus aciditrophicus (strain SB).